The following is a 292-amino-acid chain: uncharacterized protein (292 aa).

Active-site charge relay system residues include Ser-44 and Tyr-106. The Proton donor role is filled by Tyr-132. Residue Lys-161 is the Schiff-base intermediate with substrate of the active site.

Belongs to the DapA family. Homotetramer.

The protein resides in the cytoplasm. This is an uncharacterized protein from Thermoplasma acidophilum (strain ATCC 25905 / DSM 1728 / JCM 9062 / NBRC 15155 / AMRC-C165).